Reading from the N-terminus, the 384-residue chain is MTTKALGDFKDSAAFSLGVELELQLVSKRDFDLTRGATDLLGSLDYDERFGEIKLEITESMIEISTQPQSTVDGIAADLSGLRDTLRQHCERNNIGICGGGTHPFHHWPERRICPGDRFNDLYQRYGYLAKQFTVFGQHVHIGCTSADEAIWLTQAFGVYVPAFIALSASSPFVDGVDSFYQSARLNAVSAFPLSGQCPPLGSWQEFTEHFAFLQACGIAQSIKDLYWDVRPKPEFGTVEIRVCDTPLTIEQATSLAALAQSLARWLLRTRPPLHTAKQAHVARYNKFQACRYGFEAMISDPVNLCQTPLKQTLADLLEAVSEDARELDCADWLSPLKQAVAENTGDAAWLRARENQHGNLNDVVREASKRLMGKNDQFQEKTK.

The protein belongs to the glutamate--cysteine ligase type 2 family. YbdK subfamily.

It carries out the reaction L-cysteine + L-glutamate + ATP = gamma-L-glutamyl-L-cysteine + ADP + phosphate + H(+). Functionally, ATP-dependent carboxylate-amine ligase which exhibits weak glutamate--cysteine ligase activity. The sequence is that of Putative glutamate--cysteine ligase 2 from Dechloromonas aromatica (strain RCB).